A 110-amino-acid polypeptide reads, in one-letter code: MGELKTMGLFLVTALAEILGCYLPYLWLTQGRSVWLLLPAGLSLMLFAWLLSLHPTAAGRVYAAYGGVYIFVAILWLWLVDGIRPSLWDLVGSLVALCGMAIIMFAPREA.

The next 4 membrane-spanning stretches (helical) occupy residues 8–28 (GLFLVTALAEILGCYLPYLWL), 33–53 (SVWLLLPAGLSLMLFAWLLSL), 63–83 (AAYGGVYIFVAILWLWLVDGI), and 87–107 (LWDLVGSLVALCGMAIIMFAP).

The protein belongs to the UPF0060 family.

The protein localises to the cell inner membrane. This chain is UPF0060 membrane protein AHA_2410, found in Aeromonas hydrophila subsp. hydrophila (strain ATCC 7966 / DSM 30187 / BCRC 13018 / CCUG 14551 / JCM 1027 / KCTC 2358 / NCIMB 9240 / NCTC 8049).